The sequence spans 876 residues: MAPLHESLSSINDVIESKPLFVPITKPILQPNSFNLSEGSLCAKDSTPILFDVPQNVTFTPFSSHSISTDAPLPILLRVQANAHKGGFLGFTKESPSDRLTNSLGRFEDREFLSLFRFKMWWSTAWIGKSGSDLQAETQWVMLKIPEIDSYVAIIPTIEGAFRASLTPGEKGNVLICAESGSTKVKESSFKSIAYIHICDNPYNLMKEAFSALRVHMNTFKLLEEKKLPKIVDKFGWCTWDACYLTVDPATIWTGVKEFEDGGVCPKFVIIDDGWQSINFDGDELDKDAENLVLGGEQMTARLTSFKECKKFRNYKGGSFITSDASHFNPLKPKMLIYKATERIQAIILRRKLVKESGEQDLTELDEKIKILSEELNAMFDEVEKEESLGSDDVSGSGMAAFTKDLRLRFKSLDDIYVWHALCGAWNGVRPETMMDLKAKVAPFELSPSLGATMADLAVDKVVEAGIGLVHPSKAHEFYDSMHSYLASVGVTGAKIDVFQTLESLAEEHGGRVELAKAYYDGLTESMIKNFNGTDVIASMQQCNEFFFLATKQISIGRVGDDFWWQDPYGDPQGVYWLQGVHMIHCSYNSIWMGQMIQPDWDMFQSDHVCAEYHAASRAICGGPVYLSDHLGKASHNFDLIKKLAFFDGTIPRCVHYALPTRDSLFKNPLFDKESILKIFNFNKFGGVIGTFNCQGAGWSPEEHRFKGYKECYTTVSGTVHVSDIEWDQNPEAAGSQVTYTGDYLVYKQQSEEILFMNSKSEAMKITLEPSAFDLLSFVPVTELVSSGVRFAPLGLINMFNCVGTVQDMKVTGDNSIRVDVKGEGRFMAYSSSAPVKCYLNDKEAEFKWEEETGKLSFFVPWVEESGGISHLSFTF.

A phosphoserine mark is found at Ser7 and Ser9.

The protein belongs to the glycosyl hydrolases 36 family.

The enzyme catalyses alpha-D-galactosyl-(1-&gt;3)-1D-myo-inositol + sucrose = raffinose + myo-inositol. Transglycosidase operating by a ping-pong reaction mechanism. Involved in the synthesis of raffinose, a major soluble carbohydrate in seeds, roots and tubers. This chain is Probable galactinol--sucrose galactosyltransferase 4 (RFS4), found in Arabidopsis thaliana (Mouse-ear cress).